We begin with the raw amino-acid sequence, 322 residues long: Undecaprenyl-phosphate 4-deoxy-4-formamido-L-arabinose transferase (322 aa).

Over 1–235 (MFEIHPVKKV…TCLTTTPLRM (235 aa)) the chain is Cytoplasmic. Residues 236-256 (LSLLGSIIAIGGFSIAVLLVI) traverse the membrane as a helical segment. At 257 to 269 (LRLTFGPQWAAEG) the chain is on the periplasmic side. The helical transmembrane segment at 270 to 290 (VFMLFAVLFTFIGAQFIGMGL) threads the bilayer. Residues 291-322 (LGEYIGRIYTDVRARPRYFVQQVIRPSSKENE) lie on the Cytoplasmic side of the membrane.

The protein belongs to the glycosyltransferase 2 family.

It localises to the cell inner membrane. It carries out the reaction UDP-4-deoxy-4-formamido-beta-L-arabinose + di-trans,octa-cis-undecaprenyl phosphate = 4-deoxy-4-formamido-alpha-L-arabinopyranosyl di-trans,octa-cis-undecaprenyl phosphate + UDP. Its pathway is glycolipid biosynthesis; 4-amino-4-deoxy-alpha-L-arabinose undecaprenyl phosphate biosynthesis; 4-amino-4-deoxy-alpha-L-arabinose undecaprenyl phosphate from UDP-4-deoxy-4-formamido-beta-L-arabinose and undecaprenyl phosphate: step 1/2. It participates in bacterial outer membrane biogenesis; lipopolysaccharide biosynthesis. In terms of biological role, catalyzes the transfer of 4-deoxy-4-formamido-L-arabinose from UDP to undecaprenyl phosphate. The modified arabinose is attached to lipid A and is required for resistance to polymyxin and cationic antimicrobial peptides. The protein is Undecaprenyl-phosphate 4-deoxy-4-formamido-L-arabinose transferase of Escherichia coli O157:H7 (strain EC4115 / EHEC).